The chain runs to 551 residues: E3 ubiquitin-protein ligase TRIM8 (551 aa).

The segment at Cys-15–Asn-56 adopts an RING-type zinc-finger fold. 2 B box-type zinc fingers span residues Cys-92–His-132 and Val-140–Val-182. Coiled-coil stretches lie at residues Asp-181–Gln-249 and Glu-274–Asp-295. The interval Gln-399–Leu-457 is disordered. Polar residues-rich tracts occupy residues Thr-405–His-424 and Tyr-446–Met-456.

It belongs to the TRIM/RBCC family. In terms of assembly, homodimer. Interacts with SOCS1 (via) SH2 domain and SOCS box. Interacts with HSP90AB1; prevents nucleus translocation of phosphorylated STAT3 and HSP90AB1. Interacts with MAP3K7/TAK1. Interacts with PIAS3. Interacts with TICAM1. Interacts with TRIM15; this interaction prevents TRIM8 cytoplasmic translocation. High expression in heart, liver, and thymus. Expressed in embryonic CNS, kidney, lens and gut.

It carries out the reaction S-ubiquitinyl-[E2 ubiquitin-conjugating enzyme]-L-cysteine + [acceptor protein]-L-lysine = [E2 ubiquitin-conjugating enzyme]-L-cysteine + N(6)-ubiquitinyl-[acceptor protein]-L-lysine.. It functions in the pathway protein modification; protein ubiquitination. In terms of biological role, E3 ubiquitin-protein ligase that participates in multiple biological processes including cell survival, differentiation, apoptosis, and in particular, the innate immune response. Participates in the activation of interferon-gamma signaling by promoting proteasomal degradation of the repressor SOCS1. Plays a positive role in the TNFalpha and IL-1beta signaling pathways. Mechanistically, induces the 'Lys-63'-linked polyubiquitination of MAP3K7/TAK1 component leading to the activation of NF-kappa-B. Also modulates STAT3 activity through negative regulation of PIAS3, either by degradation of PIAS3 through the ubiquitin-proteasome pathway or exclusion of PIAS3 from the nucleus. Negatively regulates TLR3/4-mediated innate immune response by catalyzing 'Lys-6'- and 'Lys-33'-linked polyubiquitination of TICAM1 and thereby disrupting the TICAM1-TBK1 interaction. In Mus musculus (Mouse), this protein is E3 ubiquitin-protein ligase TRIM8 (Trim8).